The chain runs to 362 residues: Ferrochelatase (362 aa).

Fe cation is bound by residues H228 and E309.

This sequence belongs to the ferrochelatase family.

Its subcellular location is the cytoplasm. It catalyses the reaction heme b + 2 H(+) = protoporphyrin IX + Fe(2+). It functions in the pathway porphyrin-containing compound metabolism; protoheme biosynthesis; protoheme from protoporphyrin-IX: step 1/1. Its function is as follows. Catalyzes the ferrous insertion into protoporphyrin IX. The sequence is that of Ferrochelatase from Bordetella pertussis (strain Tohama I / ATCC BAA-589 / NCTC 13251).